The sequence spans 102 residues: Thioredoxin (102 aa).

In terms of domain architecture, Thioredoxin spans 1-102 (MVKVVSAENF…SLIRLINQHS (102 aa)). Cys28 and Cys31 are disulfide-bonded.

It belongs to the thioredoxin family.

In terms of biological role, participates in various redox reactions through the reversible oxidation of its active center dithiol to a disulfide and catalyzes dithiol-disulfide exchange reactions. The protein is Thioredoxin (trxA) of Chlamydia caviae (strain ATCC VR-813 / DSM 19441 / 03DC25 / GPIC) (Chlamydophila caviae).